We begin with the raw amino-acid sequence, 380 residues long: Chaperone protein DnaJ (380 aa).

The region spanning Asp4–Gly69 is the J domain. The CR-type zinc-finger motif lies at Gly135–Asn213. Residues Cys148, Cys151, Cys165, Cys168, Cys187, Cys190, Cys201, and Cys204 each coordinate Zn(2+). CXXCXGXG motif repeat units follow at residues Cys148–Gly155, Cys165–Gly172, Cys187–Gly194, and Cys201–Arg208.

It belongs to the DnaJ family. Homodimer. Zn(2+) serves as cofactor.

The protein localises to the cytoplasm. Its function is as follows. Participates actively in the response to hyperosmotic and heat shock by preventing the aggregation of stress-denatured proteins and by disaggregating proteins, also in an autonomous, DnaK-independent fashion. Unfolded proteins bind initially to DnaJ; upon interaction with the DnaJ-bound protein, DnaK hydrolyzes its bound ATP, resulting in the formation of a stable complex. GrpE releases ADP from DnaK; ATP binding to DnaK triggers the release of the substrate protein, thus completing the reaction cycle. Several rounds of ATP-dependent interactions between DnaJ, DnaK and GrpE are required for fully efficient folding. Also involved, together with DnaK and GrpE, in the DNA replication of plasmids through activation of initiation proteins. The sequence is that of Chaperone protein DnaJ from Bartonella quintana (strain Toulouse) (Rochalimaea quintana).